The following is a 213-amino-acid chain: Eukaryotic translation initiation factor isoform 4E (213 aa).

Positions 1 to 37 (MATEVAAAVPPPQLDAEENSGLEAAAAEAKIQPSSGP) are disordered. MRNA is bound by residues 56-61 (QGAAWG), Lys88, and 106-107 (WE). A disulfide bond links Cys111 and Cys150. MRNA-binding positions include 157–162 (RQRQDK) and 202–205 (KRER).

The protein belongs to the eukaryotic initiation factor 4E family. As to quaternary structure, EIF4F is a multi-subunit complex, the composition of which varies with external and internal environmental conditions. It is composed of at least EIF4A, EIF4E and EIF4G. EIF4E is also known to interact with other partners. In higher plants two isoforms of EIF4F have been identified, named isoform EIF4F and isoform EIF(iso)4F. Isoform EIF4F has subunits p220 and p26, whereas isoform EIF(iso)4F has subunits p82 and p28. In terms of assembly, (Microbial infection) Interacts with potyvirus viral genome-linked protein (VPg) of plum pox virus (PPV) strain D both in nucleus and cytoplasm; this interaction is possible in susceptible hosts but is impaired in resistant plants. In terms of processing, according to the redox status, the Cys-111-Cys-150 disulfide bridge may have a role in regulating protein function by affecting its ability to bind capped mRNA. Mostly expressed in leaves, flower buds, leaf buds and anthers, to a lower extent in roots, stems and green immature fruit, and, at low levels, in petals.

Its subcellular location is the cytoplasm. The protein resides in the nucleus. Its function is as follows. Component of the protein complex eIF4F, which is involved in the recognition of the mRNA cap, ATP-dependent unwinding of 5'-terminal secondary structure and recruitment of mRNA to the ribosome. Recognizes and binds the 7-methylguanosine-containing mRNA cap during an early step in the initiation of protein synthesis and facilitates ribosome binding by inducing the unwinding of the mRNAs secondary structures. Key component of recessive resistance to potyviruses such as the plum pox virus (PPV) strain D. In terms of biological role, (Microbial infection) Susceptibility host factor required for viral infection by recruiting viral RNAs to the host ribosomal complex via an interaction with viral genome-linked protein (VPg). This is Eukaryotic translation initiation factor isoform 4E from Prunus domestica (Garden plum).